We begin with the raw amino-acid sequence, 965 residues long: Valine--tRNA ligase (965 aa).

Positions 1-22 are disordered; sequence MENTPSHINKTEPSLDKTYSPQ. Positions 56–66 match the 'HIGH' region motif; the sequence is PNVTGSLHMGH. A 'KMSKS' region motif is present at residues 568 to 572; the sequence is KMSKS. K571 is a binding site for ATP. A coiled-coil region spans residues 896-965; it reads LIDKATELDR…IEQQATIAAL (70 aa).

The protein belongs to the class-I aminoacyl-tRNA synthetase family. ValS type 1 subfamily. In terms of assembly, monomer.

The protein localises to the cytoplasm. The catalysed reaction is tRNA(Val) + L-valine + ATP = L-valyl-tRNA(Val) + AMP + diphosphate. In terms of biological role, catalyzes the attachment of valine to tRNA(Val). As ValRS can inadvertently accommodate and process structurally similar amino acids such as threonine, to avoid such errors, it has a 'posttransfer' editing activity that hydrolyzes mischarged Thr-tRNA(Val) in a tRNA-dependent manner. The protein is Valine--tRNA ligase of Yersinia pseudotuberculosis serotype I (strain IP32953).